The following is a 158-amino-acid chain: NADH-quinone oxidoreductase subunit B (158 aa).

Positions 37, 38, 102, and 132 each coordinate [4Fe-4S] cluster.

It belongs to the complex I 20 kDa subunit family. In terms of assembly, NDH-1 is composed of 14 different subunits. Subunits NuoB, C, D, E, F, and G constitute the peripheral sector of the complex. Requires [4Fe-4S] cluster as cofactor.

Its subcellular location is the cell inner membrane. It carries out the reaction a quinone + NADH + 5 H(+)(in) = a quinol + NAD(+) + 4 H(+)(out). In terms of biological role, NDH-1 shuttles electrons from NADH, via FMN and iron-sulfur (Fe-S) centers, to quinones in the respiratory chain. Couples the redox reaction to proton translocation (for every two electrons transferred, four hydrogen ions are translocated across the cytoplasmic membrane), and thus conserves the redox energy in a proton gradient. The sequence is that of NADH-quinone oxidoreductase subunit B from Bordetella avium (strain 197N).